Consider the following 141-residue polypeptide: Hemoglobin subunit alpha (141 aa).

Residues V1–G22 are disordered. Residues V1 to R141 form the Globin domain. H58 serves as a coordination point for O2. H87 is a heme b binding site.

The protein belongs to the globin family. In terms of assembly, heterotetramer of two alpha chains and two beta chains. In terms of tissue distribution, red blood cells.

Involved in oxygen transport from the lung to the various peripheral tissues. This Vipera aspis (Aspic viper) protein is Hemoglobin subunit alpha (HBA).